A 429-amino-acid polypeptide reads, in one-letter code: Ribonuclease E/G-like protein (429 aa).

Residues Asp290 and Asp332 each coordinate Mg(2+).

Belongs to the RNase E/G family. It depends on Mg(2+) as a cofactor.

It localises to the plastid. The protein localises to the chloroplast stroma. Functionally, involved in intercistronic processing of primary transcripts from chloroplast operons. The endonucleolytic activity of the enzyme depends on the number of phosphates at the 5' end, is inhibited by structured RNA, and preferentially cleaves A/U-rich sequences. The polypeptide is Ribonuclease E/G-like protein (rne) (Guillardia theta (Cryptophyte)).